A 222-amino-acid chain; its full sequence is MTEHKCIAIDGPAGAGKSTVAKKVAQKLNLLYIDTGAMYRAVTLKALRERINLWDDIALIELAKRTIITLLAGQKQSVLLDGLDVTREIRTPEVTNNVSIVAKIAGVREVLVQRQREMAEEAGVVMDGRDIGTVVLPKAKAKFFLTASAEERARRRAKEMMNFGYDVDLEQLIKEIEERDFMDSNRAVSPLVPAEDAVLIDSSGMTIDEVVNSIITWVEKGK.

An ATP-binding site is contributed by 11 to 19 (GPAGAGKST).

The protein belongs to the cytidylate kinase family. Type 1 subfamily.

It is found in the cytoplasm. The enzyme catalyses CMP + ATP = CDP + ADP. It carries out the reaction dCMP + ATP = dCDP + ADP. The polypeptide is Cytidylate kinase (Desulforamulus reducens (strain ATCC BAA-1160 / DSM 100696 / MI-1) (Desulfotomaculum reducens)).